Reading from the N-terminus, the 440-residue chain is MPDSGTLGTPPPEQGPTPPTTLPDVPAPVIPSASVTSAASDFLAALHPPVTVPDPAPPPPPAPAAGNPPDTVTGDSVLQRILRGPTGPGTTSLAPAVRYGRQPGPEAPASAPPAAGRAVPGLYHHPVPEPDPVRVEEVSRRIKRWAEDEVQLYPEEWEGQFDGFSVGRYMVGCHPDAPTVDHLMLATRLMVAENAVDDCYCEDHGGSPVGLGGRLLLAHTAIDHFHSTAEYTPTWQASLAADAPRRAYDSAMGYFVRAATPSQSDRYRHDMARLHLGYLAEGAWAQTGHVPEVWEYLAMRQFNNFRPCPTITDTVGGYELPADLHARPDMQRVIALAGNATTIVNDLYSYTKELNSPGRHLNLPVVIAEREQLCERDAYLKAVEVHNELQHSFEAAAADLAEACPLPPVLRFLRGVAAWVDGNHDWHRTNTYRYSLPDFW.

2 disordered regions span residues 1 to 33 and 46 to 74; these read MPDSGTLGTPPPEQGPTPPTTLPDVPAPVIPSA and LHPPVTVPDPAPPPPPAPAAGNPPDTVTG. Pro residues-rich tracts occupy residues 9–29 and 50–63; these read TPPPEQGPTPPTTLPDVPAPV and VTVPDPAPPPPPAP. The Mg(2+) site is built by D197, D198, E202, N345, S349, and E353.

It belongs to the terpene synthase family. 2-methylisoborneol synthase subfamily. It depends on Mg(2+) as a cofactor.

The catalysed reaction is (E)-2-methylgeranyl diphosphate + H2O = 2-methylisoborneol + diphosphate. Catalyzes the cyclization of 2-methylgeranyl diphosphate (2-MeGPP) to 2-methylisoborneol (2-MIB), which likely involves the intermediacy of 2-methyllinalyl diphosphate. Is also able to catalyze the cyclization of geranyl diphosphate (GPP), albeit with much lower efficiency, leading to the formation of a complex mixture of cyclic monoterpenes, consisting of alpha-pinene (6%), beta-pinene (23%), limonene (32%), gamma-terpinene (29%), and delta-terpinene (10%). This is 2-methylisoborneol synthase from Streptomyces coelicolor (strain ATCC BAA-471 / A3(2) / M145).